We begin with the raw amino-acid sequence, 801 residues long: Na(+)/H(+) antiporter subunit A1 (801 aa).

20 consecutive transmembrane segments (helical) span residues 1–21 (MSLL…IPFL), 30–50 (LGWF…SLIS), 79–99 (LGLL…LYSI), 117–137 (LFMG…LYLF), 166–186 (LIIT…LSLA), 206–226 (PFFI…SAQV), 228–250 (FYIW…HSAT), 265–285 (IFAI…ITLF), 300–320 (ILAF…GIGA), 337–357 (FVAA…LFMI), 373–393 (LGGL…TTLS), 427–447 (LGIL…VYSI), 472–492 (ILML…GLFP), 522–542 (GITP…LLLI), 591–611 (LVII…SVPF), 623–643 (VFEG…IFAK), 646–666 (LFSI…FIFF), 671–691 (LALT…LCFY), 707–727 (LTNA…GLIG), and 764–784 (MDTL…YTMI).

Belongs to the CPA3 antiporters (TC 2.A.63) subunit A family. As to quaternary structure, may form a heterooligomeric complex that consists of seven subunits: mnhA1, mnhB1, mnhC1, mnhD1, mnhE1, mnhF1 and mnhG1.

Its subcellular location is the cell membrane. In terms of biological role, mnh complex is a Na(+)/H(+) antiporter involved in Na(+) excretion. In Staphylococcus epidermidis (strain ATCC 35984 / DSM 28319 / BCRC 17069 / CCUG 31568 / BM 3577 / RP62A), this protein is Na(+)/H(+) antiporter subunit A1 (mnhA1).